We begin with the raw amino-acid sequence, 194 residues long: Large ribosomal subunit protein uL5 (194 aa).

This sequence belongs to the universal ribosomal protein uL5 family. In terms of assembly, part of the 50S ribosomal subunit; part of the 5S rRNA/L5/L18/L25 subcomplex. Contacts the 5S rRNA and the P site tRNA. Forms a bridge to the 30S subunit in the 70S ribosome.

In terms of biological role, this is one of the proteins that bind and probably mediate the attachment of the 5S RNA into the large ribosomal subunit, where it forms part of the central protuberance. In the 70S ribosome it contacts protein S13 of the 30S subunit (bridge B1b), connecting the 2 subunits; this bridge is implicated in subunit movement. Contacts the P site tRNA; the 5S rRNA and some of its associated proteins might help stabilize positioning of ribosome-bound tRNAs. In Frankia alni (strain DSM 45986 / CECT 9034 / ACN14a), this protein is Large ribosomal subunit protein uL5.